The following is a 519-amino-acid chain: Methionine--tRNA ligase (519 aa).

A 'HIGH' region motif is present at residues 11-21; that stretch reads AYPNAAPHVGH. The short motif at 299–303 is the 'KMSKS' region element; that stretch reads KMSKS. Residue lysine 302 participates in ATP binding. Positions 500 to 519 are disordered; the sequence is LPPPTGVFPRYQPPQPPEGK.

Belongs to the class-I aminoacyl-tRNA synthetase family. MetG type 2B subfamily. As to quaternary structure, monomer.

The protein localises to the cytoplasm. The catalysed reaction is tRNA(Met) + L-methionine + ATP = L-methionyl-tRNA(Met) + AMP + diphosphate. Its function is as follows. Is required not only for elongation of protein synthesis but also for the initiation of all mRNA translation through initiator tRNA(fMet) aminoacylation. The chain is Methionine--tRNA ligase (metG) from Mycobacterium tuberculosis (strain CDC 1551 / Oshkosh).